A 116-amino-acid chain; its full sequence is Dynein light chain Tctex-type 3 (116 aa).

3'-nitrotyrosine is present on Tyr-4.

Belongs to the dynein light chain Tctex-type family. Homodimer. The cytoplasmic dynein 1 complex consists of two catalytic heavy chains (HCs) and a number of non-catalytic subunits presented by intermediate chains (ICs), light intermediate chains (LICs) and light chains (LCs); the composition seems to vary in respect to the IC, LIC and LC composition. The heavy chain homodimer serves as a scaffold for the probable homodimeric assembly of the respective non-catalytic subunits. The ICs and LICs bind directly to the HC dimer and the LCs assemble on the IC dimer. DYNLT1 and DYNLT3 compete for association with dynein IC (DYNC1I1 or DYNC1I2). Self-associates. Interacts with DYNC1I1 and DYNC1I2. Interacts with BUB3. Interacts with SATB1 in nucleus to form complex with matrix attachment regions (MARs) of DNA.

It is found in the nucleus. It localises to the cytoplasm. Its subcellular location is the cytoskeleton. The protein resides in the chromosome. The protein localises to the centromere. It is found in the kinetochore. Acts as one of several non-catalytic accessory components of the cytoplasmic dynein 1 complex that are thought to be involved in linking dynein to cargos and to adapter proteins that regulate dynein function. Cytoplasmic dynein 1 acts as a motor for the intracellular retrograde motility of vesicles and organelles along microtubules. Probably binds BUB3 as part of transport cargo. Required for the efficient progression through mitosis. The polypeptide is Dynein light chain Tctex-type 3 (DYNLT3) (Ovis aries (Sheep)).